The following is a 339-amino-acid chain: Glycerol-3-phosphate dehydrogenase [NAD(P)+] (339 aa).

Positions 15, 16, 36, and 110 each coordinate NADPH. Residues K110, G139, and T141 each contribute to the sn-glycerol 3-phosphate site. A143 provides a ligand contact to NADPH. The sn-glycerol 3-phosphate site is built by K195, D248, S258, R259, and N260. K195 (proton acceptor) is an active-site residue. R259 is an NADPH binding site. NADPH is bound by residues V283 and E285.

The protein belongs to the NAD-dependent glycerol-3-phosphate dehydrogenase family.

The protein resides in the cytoplasm. The catalysed reaction is sn-glycerol 3-phosphate + NAD(+) = dihydroxyacetone phosphate + NADH + H(+). It catalyses the reaction sn-glycerol 3-phosphate + NADP(+) = dihydroxyacetone phosphate + NADPH + H(+). Its pathway is membrane lipid metabolism; glycerophospholipid metabolism. In terms of biological role, catalyzes the reduction of the glycolytic intermediate dihydroxyacetone phosphate (DHAP) to sn-glycerol 3-phosphate (G3P), the key precursor for phospholipid synthesis. The protein is Glycerol-3-phosphate dehydrogenase [NAD(P)+] of Yersinia pseudotuberculosis serotype O:1b (strain IP 31758).